A 330-amino-acid polypeptide reads, in one-letter code: MRVTMSLEALTTEALAAIAAAQDLVALDQVRVQFTGKKSQLAEQSKALGKMDPEERKVQGAAIHAVRETINNALTERQTALQQAALAQKLASETIDITLPGRGQRVGTVHPVTQVQERICQFFTKAGFTVATGPEVEDDYHNFEALNIPGHHPARAMHDTFYFDANHLLRTHTSGVQIRTMETSQPPIRIVCPGRVYRCDSDQTHSPMFHQIEGLYVAENTSFAELKGLLINLLNEFFEKDLKVRFRPSYFPFTEPSAEVDIMDERGRWLEVLGCGMVHPNVLRAAGIDPDKYKGFAFGLGVERFAMLRYGINDLRMFYQNDVRFLRQFA.

Glu-255 lines the Mg(2+) pocket.

It belongs to the class-II aminoacyl-tRNA synthetase family. Phe-tRNA synthetase alpha subunit type 1 subfamily. As to quaternary structure, tetramer of two alpha and two beta subunits. Mg(2+) is required as a cofactor.

The protein localises to the cytoplasm. It carries out the reaction tRNA(Phe) + L-phenylalanine + ATP = L-phenylalanyl-tRNA(Phe) + AMP + diphosphate + H(+). The chain is Phenylalanine--tRNA ligase alpha subunit from Acinetobacter baumannii (strain SDF).